Here is a 590-residue protein sequence, read N- to C-terminus: Bacillolysin (590 aa).

A signal peptide spans 1 to 24 (MKKVWFSLLGGAMLLGSVASGASA). The propeptide at 25-286 (ESSVSGPAQL…GSIVFQYDII (262 aa)) is activation peptide. 3 residues coordinate Ca(2+): D339, D341, and D419. H423 contacts Zn(2+). E424 is a catalytic residue. H427 and E447 together coordinate Zn(2+). Ca(2+)-binding residues include D466, Y469, T470, I473, and D476. Residue H507 is the Proton donor of the active site.

This sequence belongs to the peptidase M4 family. Ca(2+) serves as cofactor. It depends on Zn(2+) as a cofactor.

The protein localises to the secreted. It carries out the reaction Similar, but not identical, to that of thermolysin.. In terms of biological role, involved in the generation of beta- and alpha-amylases from the large amylase precursor. In Paenibacillus polymyxa (Bacillus polymyxa), this protein is Bacillolysin (npr).